The primary structure comprises 703 residues: Lethal(3)malignant brain tumor-like protein 2 (703 aa).

Residues 1–70 (MEKPRGTEET…AGELPTSPLH (70 aa)) are disordered. S13 is subject to Phosphoserine. The segment covering 15–25 (PMEEEEDDDLE) has biased composition (acidic residues). Low complexity predominate over residues 35 to 49 (SYNSSAGSESSSYLE). Residues 50 to 60 (ESSEAENEDRE) show a composition bias toward acidic residues. Phosphoserine is present on S67. An FCS-type zinc finger spans residues 81 to 116 (DGSGSEPAVCEMCGIVGTREAFFSKTKRFCSVSCSR). Zn(2+) contacts are provided by C90, C93, C110, and C114. MBT repeat units follow at residues 179–283 (FDWG…LVPP), 291–391 (TDWK…IKMS), 397–500 (MSHH…LTPP), and 508–604 (FDWE…LQPP). S338 is subject to Phosphoserine. K405 participates in a covalent cross-link: Glycyl lysine isopeptide (Lys-Gly) (interchain with G-Cter in SUMO2). 2 disordered regions span residues 604 to 649 (PVSA…KKPL) and 672 to 703 (VKEE…ERDS). Positions 619–634 (TKKKKKQFGKKRKRIP) are enriched in basic residues. Glycyl lysine isopeptide (Lys-Gly) (interchain with G-Cter in SUMO2) cross-links involve residues K647 and K673. Phosphoserine occurs at positions 681, 685, and 687. A Glycyl lysine isopeptide (Lys-Gly) (interchain with G-Cter in SUMO1); alternate cross-link involves residue K698. K698 is covalently cross-linked (Glycyl lysine isopeptide (Lys-Gly) (interchain with G-Cter in SUMO2); alternate).

In terms of assembly, part of the E2F6.com-1 complex in G0 phase composed of E2F6, MGA, MAX, TFDP1, CBX3, BAT8, EUHMTASE1, RING1, RNF2, MBLR, BAT8 and YAF2.

Its subcellular location is the nucleus. Functionally, putative Polycomb group (PcG) protein. PcG proteins maintain the transcriptionally repressive state of genes, probably via a modification of chromatin, rendering it heritably changed in its expressibility. Its association with a chromatin-remodeling complex suggests that it may contribute to prevent expression of genes that trigger the cell into mitosis. Binds to monomethylated and dimethylated 'Lys-20' on histone H4. Binds histone H3 peptides that are monomethylated or dimethylated on 'Lys-4', 'Lys-9' or 'Lys-27'. The polypeptide is Lethal(3)malignant brain tumor-like protein 2 (L3mbtl2) (Rattus norvegicus (Rat)).